The primary structure comprises 1144 residues: Type II inositol polyphosphate 5-phosphatase 14 (1144 aa).

Disordered regions lie at residues 15–67 (ASLV…FDSS) and 81–118 (GRTS…DDIE). WD repeat units follow at residues 158 to 196 (ETQT…EVGC), 216 to 255 (VPTS…TTTA), 269 to 307 (AHRG…KSLV), 445 to 483 (EDTR…LREV), and 524 to 561 (SHNE…PLDS). 2 catalytic regions span residues 791–807 (DLVA…FGIT) and 870–885 (KKRI…YRDN). A Glycyl lysine isopeptide (Lys-Gly) (interchain with G-Cter in ubiquitin) cross-link involves residue Lys-949. Residues 1111 to 1131 (TTMTKNLEGSTRYQTDANRGG) are compositionally biased toward polar residues. Positions 1111 to 1144 (TTMTKNLEGSTRYQTDANRGGSTRHRTDDSTRRG) are disordered. The segment covering 1135–1144 (HRTDDSTRRG) has biased composition (basic and acidic residues).

Belongs to the inositol polyphosphate 5-phosphatase family. It depends on Mg(2+) as a cofactor. As to expression, expressed in young seedlings and flowers.

It catalyses the reaction a 1,2-diacyl-sn-glycero-3-phospho-(1D-myo-inositol-4,5-bisphosphate) + H2O = a 1,2-diacyl-sn-glycero-3-phospho-(1D-myo-inositol 4-phosphate) + phosphate. It carries out the reaction a 1,2-diacyl-sn-glycero-3-phospho-(1D-myo-inositol-3,4,5-trisphosphate) + H2O = a 1,2-diacyl-sn-glycero-3-phospho-(1D-myo-inositol-3,4-bisphosphate) + phosphate. The enzyme catalyses 1D-myo-inositol 1,4,5-trisphosphate + H2O = 1D-myo-inositol 1,4-bisphosphate + phosphate. Has phosphatase activity toward PtdIns(4,5)P2, PtdIns(3,4,5)P3 and Ins(1,4,5)P3. This is Type II inositol polyphosphate 5-phosphatase 14 from Arabidopsis thaliana (Mouse-ear cress).